Here is a 712-residue protein sequence, read N- to C-terminus: Polyribonucleotide nucleotidyltransferase (712 aa).

Mg(2+)-binding residues include Asp493 and Asp499. Residues 560 to 622 form the KH domain; sequence PRLTKLTIDP…RDAEAAIERI (63 aa). Residues 632-700 form the S1 motif domain; the sequence is GEDYVGTVKG…DDGKMRLTRK (69 aa).

Belongs to the polyribonucleotide nucleotidyltransferase family. It depends on Mg(2+) as a cofactor.

Its subcellular location is the cytoplasm. It carries out the reaction RNA(n+1) + phosphate = RNA(n) + a ribonucleoside 5'-diphosphate. Its function is as follows. Involved in mRNA degradation. Catalyzes the phosphorolysis of single-stranded polyribonucleotides processively in the 3'- to 5'-direction. This Salinibacter ruber (strain DSM 13855 / M31) protein is Polyribonucleotide nucleotidyltransferase.